The chain runs to 1435 residues: DNA polymerase III PolC-type (1435 aa).

The Exonuclease domain maps to 420-576 (YVVFDVETTG…YDTEATGYLL (157 aa)).

Belongs to the DNA polymerase type-C family. PolC subfamily.

It localises to the cytoplasm. The catalysed reaction is DNA(n) + a 2'-deoxyribonucleoside 5'-triphosphate = DNA(n+1) + diphosphate. Required for replicative DNA synthesis. This DNA polymerase also exhibits 3' to 5' exonuclease activity. This Bacillus cereus (strain ATCC 14579 / DSM 31 / CCUG 7414 / JCM 2152 / NBRC 15305 / NCIMB 9373 / NCTC 2599 / NRRL B-3711) protein is DNA polymerase III PolC-type.